The primary structure comprises 456 residues: uncharacterized protein (456 aa).

The TRAM domain occupies 3–61; the sequence is TIKKNEVKTGKVIDLTHEGHGVVKVDRYPIFIPNALIDEEIKFKLIKVKKNFAIGKLIE. [4Fe-4S] cluster contacts are provided by cysteine 74, cysteine 80, cysteine 83, and cysteine 162. S-adenosyl-L-methionine contacts are provided by glutamine 286, tyrosine 315, glutamate 336, and aspartate 384. Catalysis depends on cysteine 411, which acts as the Nucleophile.

This sequence belongs to the class I-like SAM-binding methyltransferase superfamily. RNA M5U methyltransferase family.

This is an uncharacterized protein from Staphylococcus epidermidis (strain ATCC 12228 / FDA PCI 1200).